The following is a 295-amino-acid chain: Nucleotide-binding protein PEPE_0450 (295 aa).

12 to 19 is an ATP binding site; that stretch reads GMSGAGKT. 62 to 65 serves as a coordination point for GTP; sequence DLRS.

This sequence belongs to the RapZ-like family.

Displays ATPase and GTPase activities. The protein is Nucleotide-binding protein PEPE_0450 of Pediococcus pentosaceus (strain ATCC 25745 / CCUG 21536 / LMG 10740 / 183-1w).